A 307-amino-acid polypeptide reads, in one-letter code: tRNA dimethylallyltransferase (307 aa).

8–15 (GPTGSGKS) provides a ligand contact to ATP. Position 10-15 (10-15 (TGSGKS)) interacts with substrate. Residues 33 to 36 (DSLQ) form an interaction with substrate tRNA region.

The protein belongs to the IPP transferase family. Monomer. Mg(2+) is required as a cofactor.

The catalysed reaction is adenosine(37) in tRNA + dimethylallyl diphosphate = N(6)-dimethylallyladenosine(37) in tRNA + diphosphate. Its function is as follows. Catalyzes the transfer of a dimethylallyl group onto the adenine at position 37 in tRNAs that read codons beginning with uridine, leading to the formation of N6-(dimethylallyl)adenosine (i(6)A). The chain is tRNA dimethylallyltransferase from Solibacter usitatus (strain Ellin6076).